The primary structure comprises 903 residues: KAT8 regulatory NSL complex subunit 1-like protein (903 aa).

3 disordered regions span residues 319–343 (DSDA…DECN), 419–441 (MPKS…PSSP), and 652–676 (TECT…HRSE). 2 stretches are compositionally biased toward polar residues: residues 423–441 (PQGT…PSSP) and 652–661 (TECTSSYSPD). Positions 748 to 862 (EIITPSWKEV…ESPKGKTIHW (115 aa)) constitute a PEHE domain.

The polypeptide is KAT8 regulatory NSL complex subunit 1-like protein (kansl1l) (Xenopus tropicalis (Western clawed frog)).